Here is a 70-residue protein sequence, read N- to C-terminus: Large ribosomal subunit protein bL31 (70 aa).

Residues cysteine 16, cysteine 18, cysteine 37, and cysteine 40 each coordinate Zn(2+).

This sequence belongs to the bacterial ribosomal protein bL31 family. Type A subfamily. In terms of assembly, part of the 50S ribosomal subunit. Zn(2+) is required as a cofactor.

Its function is as follows. Binds the 23S rRNA. This chain is Large ribosomal subunit protein bL31, found in Actinobacillus pleuropneumoniae serotype 5b (strain L20).